We begin with the raw amino-acid sequence, 451 residues long: UPF0210 protein LMOf2365_0563 (451 aa).

The protein belongs to the UPF0210 family. As to quaternary structure, homodimer.

The chain is UPF0210 protein LMOf2365_0563 from Listeria monocytogenes serotype 4b (strain F2365).